The sequence spans 152 residues: Globin CTT-E/E' (152 aa).

Positions 1 to 15 (MKFIILALCVAAASA) are cleaved as a signal peptide. The Globin domain maps to 16-152 (LSGDQIGLVQ…AFFGAVFAKM (137 aa)). Residues His-73 and His-102 each contribute to the heme b site.

This sequence belongs to the globin family.

The sequence is that of Globin CTT-E/E' (CTT-E) from Chironomus thummi thummi (Midge).